Reading from the N-terminus, the 391-residue chain is Chalcone synthase (391 aa).

Cys-164 is an active-site residue.

Belongs to the thiolase-like superfamily. Chalcone/stilbene synthases family.

The catalysed reaction is (E)-4-coumaroyl-CoA + 3 malonyl-CoA + 3 H(+) = 2',4,4',6'-tetrahydroxychalcone + 3 CO2 + 4 CoA. Its pathway is secondary metabolite biosynthesis; flavonoid biosynthesis. The primary product of this enzyme is 4,2',4',6'-tetrahydroxychalcone (also termed naringenin-chalcone or chalcone) which can under specific conditions spontaneously isomerize into naringenin. This is Chalcone synthase (CHS) from Dianthus caryophyllus (Carnation).